The chain runs to 137 residues: Phosphoribosyl-AMP cyclohydrolase (137 aa).

Asp84 is a Mg(2+) binding site. Cys85 contributes to the Zn(2+) binding site. Residues Asp86 and Asp88 each coordinate Mg(2+). Residues Cys101 and Cys108 each coordinate Zn(2+).

It belongs to the PRA-CH family. In terms of assembly, homodimer. The cofactor is Mg(2+). Zn(2+) serves as cofactor.

It localises to the cytoplasm. The catalysed reaction is 1-(5-phospho-beta-D-ribosyl)-5'-AMP + H2O = 1-(5-phospho-beta-D-ribosyl)-5-[(5-phospho-beta-D-ribosylamino)methylideneamino]imidazole-4-carboxamide. The protein operates within amino-acid biosynthesis; L-histidine biosynthesis; L-histidine from 5-phospho-alpha-D-ribose 1-diphosphate: step 3/9. Catalyzes the hydrolysis of the adenine ring of phosphoribosyl-AMP. This chain is Phosphoribosyl-AMP cyclohydrolase, found in Chlorobium phaeovibrioides (strain DSM 265 / 1930) (Prosthecochloris vibrioformis (strain DSM 265)).